A 310-amino-acid polypeptide reads, in one-letter code: p-hydroxybenzoic acid efflux pump subunit AaeA (310 aa).

The chain crosses the membrane as a helical span at residues 12-32; sequence AITVVLVILAFIAIFNAWVYY.

The protein belongs to the membrane fusion protein (MFP) (TC 8.A.1) family.

Its subcellular location is the cell inner membrane. Its function is as follows. Forms an efflux pump with AaeB. This is p-hydroxybenzoic acid efflux pump subunit AaeA from Escherichia coli O139:H28 (strain E24377A / ETEC).